A 273-amino-acid polypeptide reads, in one-letter code: 4-hydroxy-tetrahydrodipicolinate reductase (273 aa).

NAD(+) is bound by residues 12 to 17 and glutamate 38; that span reads GAGGRM. Residue arginine 39 participates in NADP(+) binding. Residues 102-104 and 126-129 contribute to the NAD(+) site; these read GTT and AANF. The active-site Proton donor/acceptor is the histidine 159. Residue histidine 160 participates in (S)-2,3,4,5-tetrahydrodipicolinate binding. Lysine 163 (proton donor) is an active-site residue. 169 to 170 contacts (S)-2,3,4,5-tetrahydrodipicolinate; sequence GT.

The protein belongs to the DapB family. Homotetramer.

Its subcellular location is the cytoplasm. It carries out the reaction (S)-2,3,4,5-tetrahydrodipicolinate + NAD(+) + H2O = (2S,4S)-4-hydroxy-2,3,4,5-tetrahydrodipicolinate + NADH + H(+). It catalyses the reaction (S)-2,3,4,5-tetrahydrodipicolinate + NADP(+) + H2O = (2S,4S)-4-hydroxy-2,3,4,5-tetrahydrodipicolinate + NADPH + H(+). It functions in the pathway amino-acid biosynthesis; L-lysine biosynthesis via DAP pathway; (S)-tetrahydrodipicolinate from L-aspartate: step 4/4. In terms of biological role, catalyzes the conversion of 4-hydroxy-tetrahydrodipicolinate (HTPA) to tetrahydrodipicolinate. This chain is 4-hydroxy-tetrahydrodipicolinate reductase, found in Salmonella gallinarum (strain 287/91 / NCTC 13346).